We begin with the raw amino-acid sequence, 365 residues long: MTLQFVDPENYETLLAAKKEHLNKQFAIFNPPALECFASPKLHYRMRAELRVWHDGDELYYIMFDKKTKQKFRVEQFPPASELINNLMPVLLELVKSSEILRYKLFQIDFLSNLKGQVIVSLLYHKQLDDNWLVEAKRIKAELLKQFDINFIGRARKQKILLDYDYVIEELQVDGNKLFYQQIENSFTQPNAKVCEKMLEWAIDCTRDSQGDLLELYCGNGNFSLALAKNFNKVLATEIAKPSVESAQFNMAQNGINNVTVIRMSAEEFTQAINGEREFYRLKEITLSDYQCNTILVDPPRSGLDDETVKMVQHYDNILYISCNADTLSRNLEVLSKTHEIKRFALFDQFPYTYHSEAGVYLVKR.

Residues Q189, Y217, N222, E238, and D298 each coordinate S-adenosyl-L-methionine. The active-site Nucleophile is C323. Catalysis depends on E357, which acts as the Proton acceptor.

The protein belongs to the class I-like SAM-binding methyltransferase superfamily. RNA M5U methyltransferase family. TrmA subfamily.

It carries out the reaction uridine(54) in tRNA + S-adenosyl-L-methionine = 5-methyluridine(54) in tRNA + S-adenosyl-L-homocysteine + H(+). It catalyses the reaction uridine(341) in tmRNA + S-adenosyl-L-methionine = 5-methyluridine(341) in tmRNA + S-adenosyl-L-homocysteine + H(+). In terms of biological role, dual-specificity methyltransferase that catalyzes the formation of 5-methyluridine at position 54 (m5U54) in all tRNAs, and that of position 341 (m5U341) in tmRNA (transfer-mRNA). In Psychromonas ingrahamii (strain DSM 17664 / CCUG 51855 / 37), this protein is tRNA/tmRNA (uracil-C(5))-methyltransferase.